A 125-amino-acid polypeptide reads, in one-letter code: Large ribosomal subunit protein bL12 (125 aa).

The tract at residues 95–125 (APKPIKEGVDKKTAEEAKKKLEEAGAKAELK) is disordered.

The protein belongs to the bacterial ribosomal protein bL12 family. Homodimer. Part of the ribosomal stalk of the 50S ribosomal subunit. Forms a multimeric L10(L12)X complex, where L10 forms an elongated spine to which 2 to 4 L12 dimers bind in a sequential fashion. Binds GTP-bound translation factors.

Functionally, forms part of the ribosomal stalk which helps the ribosome interact with GTP-bound translation factors. Is thus essential for accurate translation. In Polynucleobacter necessarius subsp. necessarius (strain STIR1), this protein is Large ribosomal subunit protein bL12.